Here is a 234-residue protein sequence, read N- to C-terminus: LexA repressor (234 aa).

A DNA-binding region (H-T-H motif) is located at residues 26 to 46 (FEEMKEALDLKSKSGVHRLIS). Positions 73 to 100 (AVGKAAPVSQREAANTNSALPPLRAAPK) are disordered. Low complexity predominate over residues 91-100 (ALPPLRAAPK). Residues Ser154 and Lys192 each act as for autocatalytic cleavage activity in the active site.

Belongs to the peptidase S24 family. In terms of assembly, homodimer.

The catalysed reaction is Hydrolysis of Ala-|-Gly bond in repressor LexA.. Functionally, represses a number of genes involved in the response to DNA damage (SOS response), including recA and lexA. In the presence of single-stranded DNA, RecA interacts with LexA causing an autocatalytic cleavage which disrupts the DNA-binding part of LexA, leading to derepression of the SOS regulon and eventually DNA repair. The polypeptide is LexA repressor (Novosphingobium aromaticivorans (strain ATCC 700278 / DSM 12444 / CCUG 56034 / CIP 105152 / NBRC 16084 / F199)).